Consider the following 607-residue polypeptide: MSNFDPKHFLLHCARKPGVYRMLDAEGGVLYVGKARNLQARLNSYFQKNVASVKTRALVGRIRDIQTTVTGSEVEALLLEQSLIKELKPPYNILLRDDKSYPYIRITRSDRFPRVTFHRGTRRAGSQYFGPYPSGSAVREALSLIEKIFQVRNCSDSYFRNRTRPCLQHQINRCTAPCVGLVSEEDYARQVTMAADFLDGRSREVADQLSTDMEAAAAALEFEKAALLRDQLAAIQAVQQKQYAETGQGDLDVVAIETRHGLAIIEVLMIRDGRILGHRTFRPDTRGEDDRSEILEAFLSQYYLGDREDPVKPQEILLCMEIPGAEALQQALEEQWAKKVRLAWRVRSDRAAWISMAQTNAQQSMATEMAAREHMEARFLALETLLESSEPIRRIECFDISHTQGEKAVASCVVFDQQGARKQDYRYFNVNPAAGGDDYEALEEAIRRRYQRVLKEQGRMPDLLLIDGGKGQMQRGWKVVQELDLHASIRVMGIGKGPSRRPGFEALYLPCGKEMIPGPADSALHLLQQVRDEAHRFALTGHRARRGKARKQSTLDEIPGIGPKRRKALLTHFGGLKQMRNASASEFARVPGINSQMAQTLYDWFHR.

The GIY-YIG domain occupies 15 to 93 (RKPGVYRMLD…IKELKPPYNI (79 aa)). Residues 203–238 (REVADQLSTDMEAAAAALEFEKAALLRDQLAAIQAV) enclose the UVR domain. Residues 542–551 (HRARRGKARK) show a composition bias toward basic residues. Residues 542–561 (HRARRGKARKQSTLDEIPGI) form a disordered region.

Belongs to the UvrC family. Interacts with UvrB in an incision complex.

It is found in the cytoplasm. In terms of biological role, the UvrABC repair system catalyzes the recognition and processing of DNA lesions. UvrC both incises the 5' and 3' sides of the lesion. The N-terminal half is responsible for the 3' incision and the C-terminal half is responsible for the 5' incision. The polypeptide is UvrABC system protein C (Alcanivorax borkumensis (strain ATCC 700651 / DSM 11573 / NCIMB 13689 / SK2)).